Reading from the N-terminus, the 132-residue chain is Mediator of RNA polymerase II transcription subunit 11 (132 aa).

This sequence belongs to the Mediator complex subunit 11 family. Component of the Mediator complex.

It localises to the nucleus. In terms of biological role, component of the Mediator complex, a coactivator involved in the regulated transcription of nearly all RNA polymerase II-dependent genes. Mediator functions as a bridge to convey information from gene-specific regulatory proteins to the basal RNA polymerase II transcription machinery. Mediator is recruited to promoters by direct interactions with regulatory proteins and serves as a scaffold for theQ9P086 assembly of a functional pre-initiation complex with RNA polymerase II and the general transcription factors. The protein is Mediator of RNA polymerase II transcription subunit 11 (MED11) of Aedes aegypti (Yellowfever mosquito).